The following is a 718-amino-acid chain: Polyribonucleotide nucleotidyltransferase (718 aa).

Residues aspartate 487 and aspartate 493 each contribute to the Mg(2+) site. One can recognise a KH domain in the interval 554–613 (PRIETFKIPTDKIREVIGTGGKVIREIVEKTGAKVNIEDDGTVKVASSDGESIKAAIKWI). One can recognise an S1 motif domain in the interval 623 to 691 (GEIYEGTVVK…DRGKTRLSMK (69 aa)). A disordered region spans residues 692–718 (VVDQETGEDLEAKQKAEGDAPREAAGE). Residues 701–718 (LEAKQKAEGDAPREAAGE) are compositionally biased toward basic and acidic residues.

This sequence belongs to the polyribonucleotide nucleotidyltransferase family. It depends on Mg(2+) as a cofactor.

It localises to the cytoplasm. The enzyme catalyses RNA(n+1) + phosphate = RNA(n) + a ribonucleoside 5'-diphosphate. Functionally, involved in mRNA degradation. Catalyzes the phosphorolysis of single-stranded polyribonucleotides processively in the 3'- to 5'-direction. This chain is Polyribonucleotide nucleotidyltransferase, found in Nitrobacter winogradskyi (strain ATCC 25391 / DSM 10237 / CIP 104748 / NCIMB 11846 / Nb-255).